The primary structure comprises 900 residues: uncharacterized protein (900 aa).

Residues methionine 1–arginine 16 are compositionally biased toward basic and acidic residues. 5 disordered regions span residues methionine 1–serine 84, asparagine 103–serine 160, asparagine 512–glycine 556, leucine 568–asparagine 613, and lysine 648–proline 676. Polar residues predominate over residues glycine 17 to serine 27. Basic and acidic residues predominate over residues lysine 30 to arginine 58. Composition is skewed to low complexity over residues glutamine 63 to serine 76 and asparagine 103 to lysine 127. Residue serine 105 is modified to Phosphoserine. Residues glycine 129–arginine 143 show a composition bias toward basic residues. The span at serine 528 to serine 537 shows a compositional bias: low complexity. Residues lysine 543 to lysine 553 are compositionally biased toward basic residues. Low complexity-rich tracts occupy residues serine 570 to proline 601 and serine 665 to proline 676.

This is an uncharacterized protein from Saccharomyces cerevisiae (strain ATCC 204508 / S288c) (Baker's yeast).